We begin with the raw amino-acid sequence, 267 residues long: Lectin SfL-1 (267 aa).

A run of 4 repeats spans residues 1-67, 68-135, 136-202, and 203-267. Positions 1 to 267 are 4 X approximate tandem repeats; that stretch reads GRYTVQNQWG…GPIGFKGTAI (267 aa).

As to quaternary structure, monomer.

Its function is as follows. Lectin specific for high mannose N-glycans, recognizes the branched moiety of these glycans. Does not recognize other types of N-glycans or monosaccharides. The polypeptide is Lectin SfL-1 (Solieria filiformis (Red alga)).